The primary structure comprises 244 residues: Ribonuclease PH (244 aa).

Phosphate contacts are provided by residues Arg86 and 124-126 (GTR).

This sequence belongs to the RNase PH family. Homohexameric ring arranged as a trimer of dimers.

The catalysed reaction is tRNA(n+1) + phosphate = tRNA(n) + a ribonucleoside 5'-diphosphate. Its function is as follows. Phosphorolytic 3'-5' exoribonuclease that plays an important role in tRNA 3'-end maturation. Removes nucleotide residues following the 3'-CCA terminus of tRNAs; can also add nucleotides to the ends of RNA molecules by using nucleoside diphosphates as substrates, but this may not be physiologically important. Probably plays a role in initiation of 16S rRNA degradation (leading to ribosome degradation) during starvation. The polypeptide is Ribonuclease PH (Glaesserella parasuis serovar 5 (strain SH0165) (Haemophilus parasuis)).